The chain runs to 147 residues: uncharacterized protein (147 aa).

This sequence belongs to the MG185/MG260 family.

This is an uncharacterized protein from Mycoplasma pneumoniae (strain ATCC 29342 / M129 / Subtype 1) (Mycoplasmoides pneumoniae).